Consider the following 158-residue polypeptide: Botcinic acid biosynthesis cluster B protein 16 (158 aa).

It functions in the pathway polyketide biosynthesis. In terms of biological role, part of the gene cluster B that mediates the biosynthesis of botcinic acid and its botcinin derivatives, acetate-derived polyketides that contribute to virulence when combined with the sesquiterpene botrydial. Botcinic acid and its derivatives have been shown to induce chlorosis and necrosis during host plant infection, but also have antifungal activities. Two polyketide synthases, BOA6 and BOA9, are involved in the biosynthesis of botcinins. BOA6 mediates the formation of the per-methylated tetraketide core by condensation of four units of malonyl-CoA with one unit of acetyl-CoA, which would be methylated in activated methylene groups to yield a bicyclic acid intermediate that could then either be converted to botrylactone derivatives or lose the starter acetate unit through a retro-Claisen type C-C bond cleavage to yield botcinin derivatives. The second polyketide synthase, BOA9, is probably required for the biosynthesis of the tetraketide side chain of botcinins. The methyltransferase (MT) domain within BOA6 is probably responsible for the incorporation of four methyl groups. The trans-enoyl reductase BOA5 might take over the enoyl reductase function of BOA6 that misses an ER domain. The monooxygenases BOA2, BOA3 and BOA4 might be involved in further hydroxylations at C4, C5 and C8, whereas BOA7, close to BOA9, could potentially be involved in the hydroxylation at C4 in the side chain of botcinins. In Botryotinia fuckeliana (strain B05.10) (Noble rot fungus), this protein is Botcinic acid biosynthesis cluster B protein 16.